The sequence spans 79 residues: Conotoxin Tr6.2 (79 aa).

The N-terminal stretch at 1–22 (MKLTCVLIISVLFLTASQLITA) is a signal peptide. Positions 23 to 47 (VYSRDKQQYRAARLRDEMRNLKGAR) are excised as a propeptide. Disulfide bonds link Cys49–Cys62, Cys56–Cys67, and Cys61–Cys77. 4-hydroxyproline is present on residues Pro60 and Pro63.

Belongs to the conotoxin O1 superfamily. In terms of tissue distribution, expressed by the venom duct.

It is found in the secreted. Its function is as follows. Ion channel inhibitor that inhibits the increase in intracellular calcium upon depolarization in DRG neurons. In vivo, both intraperitoneal and intracranial injections into mice induce hyperactivity. This is Conotoxin Tr6.2 from Conus terebra (Sea snail).